The primary structure comprises 932 residues: PMS1 protein homolog 1 (932 aa).

A disordered region spans residues 465–493 (TQSENGNKDHIDESGENEEEAGLENSSEI). Positions 571 to 639 (IKKPMSASAL…RYNSQMKRAI (69 aa)) form a DNA-binding region, HMG box.

This sequence belongs to the DNA mismatch repair MutL/HexB family. In terms of assembly, component of the DNA mismatch repair (MMR) complex composed at least of MSH2, MSH3, MSH6, PMS1 and MLH1. The MutL-beta complex is a heterodimer of PMS1 and MLH1. Interacts with MCM9.

The protein localises to the nucleus. Probably involved in the repair of mismatches in DNA. The polypeptide is PMS1 protein homolog 1 (PMS1) (Homo sapiens (Human)).